Here is an 88-residue protein sequence, read N- to C-terminus: Small ribosomal subunit protein uS15c (88 aa).

This sequence belongs to the universal ribosomal protein uS15 family. In terms of assembly, part of the 30S ribosomal subunit.

It localises to the plastid. The protein resides in the chloroplast. The chain is Small ribosomal subunit protein uS15c (rps15) from Draba nemorosa (Woodland whitlowgrass).